A 473-amino-acid polypeptide reads, in one-letter code: Sarcalumenin (473 aa).

The N-terminal stretch at Met1 to Ala20 is a signal peptide. Positions Ile90–Ala331 constitute a Dynamin-type G domain. The tract at residues Gly100 to Ser107 is G1 motif. The tract at residues Glu128–Pro129 is G2 motif. Residues Asp190–Gly193 are G3 motif. The tract at residues Asn255–Asp258 is G4 motif. Residue Pro278 is a region of interest, G5 motif. N-linked (GlcNAc...) asparagine glycans are attached at residues Asn281 and Asn389.

The protein belongs to the TRAFAC class dynamin-like GTPase superfamily. Dynamin/Fzo/YdjA family. N-glycosylated.

The protein resides in the sarcoplasmic reticulum lumen. It localises to the sarcoplasmic reticulum membrane. The polypeptide is Sarcalumenin (SRL) (Homo sapiens (Human)).